Reading from the N-terminus, the 339-residue chain is DNA-directed RNA polymerase subunit alpha (339 aa).

The tract at residues 1–235 is alpha N-terminal domain (alpha-NTD); the sequence is MVIQKNWQEL…DQLQIFVNFE (235 aa). Residues 251 to 339 form an alpha C-terminal domain (alpha-CTD) region; sequence FNPALLKKVD…DLAKRFEEHY (89 aa).

The protein belongs to the RNA polymerase alpha chain family. Homodimer. The RNAP catalytic core consists of 2 alpha, 1 beta, 1 beta' and 1 omega subunit. When a sigma factor is associated with the core the holoenzyme is formed, which can initiate transcription.

It catalyses the reaction RNA(n) + a ribonucleoside 5'-triphosphate = RNA(n+1) + diphosphate. DNA-dependent RNA polymerase catalyzes the transcription of DNA into RNA using the four ribonucleoside triphosphates as substrates. This is DNA-directed RNA polymerase subunit alpha from Methylobacterium sp. (strain 4-46).